Consider the following 234-residue polypeptide: MHSKFFAASLLGLGAAAIPLEGVMEKRSCPAIHVFGARETTASPGYGSSSTVVNGVLSAYPGSTAEAINYPACGGQSSCGGASYSSSVAQGIAAVASAVNSFNSQCPSTKIVLVGYSQGGEIMDVALCGGGDPNQGYTNTAVQLSSSAVNMVKAAIFMGDPMFRAGLSYEVGTCAAGGFDQRPAGFSCPSAAKIKSYCDASDPYCCNGSNAATHQGYGSEYGSQALAFVKSKLG.

A signal peptide spans 1–17 (MHSKFFAASLLGLGAAA). Residues 18 to 27 (IPLEGVMEKR) constitute a propeptide that is removed on maturation. 2 disulfides stabilise this stretch: C29–C106 and C73–C79. S117 is a catalytic residue. 3 disulfide bridges follow: C128/C188, C174/C206, and C198/C205. The active site involves D202. N207 is a glycosylation site (N-linked (GlcNAc...) asparagine). Residue H214 is part of the active site.

The protein belongs to the cutinase family. Acetylxylan esterase subfamily. Monomer.

It localises to the secreted. The enzyme catalyses Deacetylation of xylans and xylo-oligosaccharides.. Its pathway is glycan degradation; xylan degradation. In terms of biological role, degrades acetylated xylans by cleaving acetyl side groups from the hetero-xylan backbone. The protein is Acetylxylan esterase 2 (axe-2) of Talaromyces purpureogenus (Soft rot fungus).